The chain runs to 161 residues: Regulatory protein RecX (161 aa).

Belongs to the RecX family.

The protein resides in the cytoplasm. In terms of biological role, modulates RecA activity. The chain is Regulatory protein RecX from Halorhodospira halophila (strain DSM 244 / SL1) (Ectothiorhodospira halophila (strain DSM 244 / SL1)).